The primary structure comprises 913 residues: Bifunctional uridylyltransferase/uridylyl-removing enzyme (913 aa).

Positions 1-358 (MFNCDVTAID…PDEERPKKQP (358 aa)) are uridylyltransferase. Residues 359–729 (INARFNQVGD…EHRELALDAV (371 aa)) are uridylyl-removing. Residues 476–592 (VDAHTLFLIR…TLFADLVGNV (117 aa)) enclose the HD domain. 2 ACT domains span residues 730 to 815 (QVFV…RIPR) and 838 to 913 (IMSL…NDRV).

This sequence belongs to the GlnD family. It depends on Mg(2+) as a cofactor.

It carries out the reaction [protein-PII]-L-tyrosine + UTP = [protein-PII]-uridylyl-L-tyrosine + diphosphate. The catalysed reaction is [protein-PII]-uridylyl-L-tyrosine + H2O = [protein-PII]-L-tyrosine + UMP + H(+). Uridylyltransferase (UTase) activity is inhibited by glutamine, while glutamine activates uridylyl-removing (UR) activity. Its function is as follows. Modifies, by uridylylation and deuridylylation, the PII regulatory proteins (GlnB and homologs), in response to the nitrogen status of the cell that GlnD senses through the glutamine level. Under low glutamine levels, catalyzes the conversion of the PII proteins and UTP to PII-UMP and PPi, while under higher glutamine levels, GlnD hydrolyzes PII-UMP to PII and UMP (deuridylylation). Thus, controls uridylylation state and activity of the PII proteins, and plays an important role in the regulation of nitrogen assimilation and metabolism. This chain is Bifunctional uridylyltransferase/uridylyl-removing enzyme, found in Psychrobacter cryohalolentis (strain ATCC BAA-1226 / DSM 17306 / VKM B-2378 / K5).